The sequence spans 164 residues: Phosphopantetheine adenylyltransferase (164 aa).

S9 contacts substrate. ATP is bound by residues 9–10 (SF) and H17. Residues K41, V78, and R92 each contribute to the substrate site. ATP-binding positions include 93-95 (GLR), E103, and 128-134 (VRTITAT).

This sequence belongs to the bacterial CoaD family. As to quaternary structure, homohexamer. The cofactor is Mg(2+).

It is found in the cytoplasm. The catalysed reaction is (R)-4'-phosphopantetheine + ATP + H(+) = 3'-dephospho-CoA + diphosphate. Its pathway is cofactor biosynthesis; coenzyme A biosynthesis; CoA from (R)-pantothenate: step 4/5. Its function is as follows. Reversibly transfers an adenylyl group from ATP to 4'-phosphopantetheine, yielding dephospho-CoA (dPCoA) and pyrophosphate. In Brucella abortus (strain 2308), this protein is Phosphopantetheine adenylyltransferase.